The primary structure comprises 261 residues: Undecaprenyl-diphosphatase 2 (261 aa).

Helical transmembrane passes span 1-21, 38-58, 75-95, 103-123, 138-158, 178-198, 212-232, and 240-260; these read MLEALLLGVVEGLTEFLPISS, PGKTYEIVVQLGAILAVCVVF, FAFARNVMVAFLPAAVIGATL, LESPLVAAIALVVGGVAILVI, MSPALALGVGFCQVLAMVPGV, AAEFSFFLAIPTMCGASAYSL, LIALGFVAAFLSALVVVKGFI, and FAPFAWYRIAFGSLMAVLILM.

Belongs to the UppP family.

The protein localises to the cell inner membrane. The enzyme catalyses di-trans,octa-cis-undecaprenyl diphosphate + H2O = di-trans,octa-cis-undecaprenyl phosphate + phosphate + H(+). Functionally, catalyzes the dephosphorylation of undecaprenyl diphosphate (UPP). Confers resistance to bacitracin. The protein is Undecaprenyl-diphosphatase 2 of Paramagnetospirillum magneticum (strain ATCC 700264 / AMB-1) (Magnetospirillum magneticum).